The sequence spans 203 residues: UPF0637 protein SH1846 (203 aa).

This sequence belongs to the UPF0637 family.

The protein is UPF0637 protein SH1846 of Staphylococcus haemolyticus (strain JCSC1435).